The sequence spans 597 residues: DNA mismatch repair protein MutL (597 aa).

The protein belongs to the DNA mismatch repair MutL/HexB family.

Functionally, this protein is involved in the repair of mismatches in DNA. It is required for dam-dependent methyl-directed DNA mismatch repair. May act as a 'molecular matchmaker', a protein that promotes the formation of a stable complex between two or more DNA-binding proteins in an ATP-dependent manner without itself being part of a final effector complex. The sequence is that of DNA mismatch repair protein MutL from Rhodopseudomonas palustris (strain BisB5).